We begin with the raw amino-acid sequence, 755 residues long: Xaa-Pro dipeptidyl-peptidase (755 aa).

Active-site charge relay system residues include Ser348, Asp468, and His498.

Belongs to the peptidase S15 family. In terms of assembly, homodimer.

It localises to the cytoplasm. The enzyme catalyses Hydrolyzes Xaa-Pro-|- bonds to release unblocked, N-terminal dipeptides from substrates including Ala-Pro-|-p-nitroanilide and (sequentially) Tyr-Pro-|-Phe-Pro-|-Gly-Pro-|-Ile.. Functionally, removes N-terminal dipeptides sequentially from polypeptides having unsubstituted N-termini provided that the penultimate residue is proline. The protein is Xaa-Pro dipeptidyl-peptidase of Streptococcus thermophilus.